The primary structure comprises 182 residues: Pyruvate synthase subunit PorC (182 aa).

As to quaternary structure, heterotetramer of one alpha, one beta, one delta and one gamma chain.

The enzyme catalyses 2 oxidized [2Fe-2S]-[ferredoxin] + pyruvate + CoA = 2 reduced [2Fe-2S]-[ferredoxin] + acetyl-CoA + CO2 + H(+). The protein is Pyruvate synthase subunit PorC (porC) of Methanosarcina barkeri (strain Fusaro / DSM 804).